Here is a 257-residue protein sequence, read N- to C-terminus: Ribonuclease HII (257 aa).

Positions 72–257 (TYIAGIDEVG…FAPIKDMIQK (186 aa)) constitute an RNase H type-2 domain. Asp-78, Glu-79, and Asp-170 together coordinate a divalent metal cation.

This sequence belongs to the RNase HII family. The cofactor is Mn(2+). Mg(2+) is required as a cofactor.

Its subcellular location is the cytoplasm. The catalysed reaction is Endonucleolytic cleavage to 5'-phosphomonoester.. Functionally, endonuclease that specifically degrades the RNA of RNA-DNA hybrids. This chain is Ribonuclease HII, found in Bacillus thuringiensis (strain Al Hakam).